The following is a 381-amino-acid chain: Heterogeneous nuclear rnp K-like protein 2 (381 aa).

The disordered stretch occupies residues 1–34 (MSQFFEAATPVAIPTNNTNGGSSDAGSAATGGAP). Residues 15–33 (TNNTNGGSSDAGSAATGGA) show a composition bias toward low complexity. KH domains lie at 43–107 (TINH…IGDI), 156–221 (IGYV…LIEI), and 258–326 (NTRI…ESML). The tract at residues 344–381 (LEAAEGDATVVTERSDSASFLEEKEEPQENHDNKEEQS) is disordered. 3 positions are modified to phosphoserine: Ser358, Ser360, and Ser362. Residues 370–381 (PQENHDNKEEQS) are compositionally biased toward basic and acidic residues.

Belongs to the HEK2 family. As to quaternary structure, binds RNA. Post-translationally, phosphorylated by the plasma membrane-Anchored casein kinase YCK1. Phosphorylation at its C-terminus reduces its RNA-binding capacity.

The protein resides in the cytoplasm. Its subcellular location is the P-body. It localises to the nucleus. It is found in the chromosome. The protein localises to the telomere. RNA-binding protein involved in the correct localization of transcripts in the cell. RNA localization is a widespread mechanism for achieving localized protein synthesis. Required for the asymmetric localization to the daughter cell nucleus of the ASH1 transcript, coding for a specific repressor of transcription. Overexpression inhibits translation of the ASH1 transcript. Involved in the stability of transcripts, like the MTL1 mRNA. Involved in structural and functional organization of telomeric chromatin and regulates silencing at the HMR locus. In Saccharomyces cerevisiae (strain YJM789) (Baker's yeast), this protein is Heterogeneous nuclear rnp K-like protein 2 (HEK2).